A 245-amino-acid chain; its full sequence is Putative binding protein HI_1525 (245 aa).

The N-terminal stretch at 1–19 is a signal peptide; the sequence is MKKLVAVTSMILTTFSVQA. Residues serine 56 and valine 163 each coordinate molybdate.

Belongs to the bacterial solute-binding protein ModA family.

It is found in the periplasm. Functionally, probably involved in the binding-dependent system. This Haemophilus influenzae (strain ATCC 51907 / DSM 11121 / KW20 / Rd) protein is Putative binding protein HI_1525.